We begin with the raw amino-acid sequence, 413 residues long: Gamma-glutamyl phosphate reductase (413 aa).

It belongs to the gamma-glutamyl phosphate reductase family.

The protein resides in the cytoplasm. It catalyses the reaction L-glutamate 5-semialdehyde + phosphate + NADP(+) = L-glutamyl 5-phosphate + NADPH + H(+). Its pathway is amino-acid biosynthesis; L-proline biosynthesis; L-glutamate 5-semialdehyde from L-glutamate: step 2/2. In terms of biological role, catalyzes the NADPH-dependent reduction of L-glutamate 5-phosphate into L-glutamate 5-semialdehyde and phosphate. The product spontaneously undergoes cyclization to form 1-pyrroline-5-carboxylate. This Lactococcus lactis subsp. cremoris (strain MG1363) protein is Gamma-glutamyl phosphate reductase.